The following is a 92-amino-acid chain: UPF0250 protein CGSHiEE_03170 (92 aa).

This sequence belongs to the UPF0250 family.

The chain is UPF0250 protein CGSHiEE_03170 from Haemophilus influenzae (strain PittEE).